A 163-amino-acid chain; its full sequence is NADH-quinone oxidoreductase subunit I (163 aa).

4Fe-4S ferredoxin-type domains are found at residues 54 to 84 (LRRY…IDSA) and 94 to 123 (TRYD…ETHI). Residues C64, C67, C70, C74, C103, C106, C109, and C113 each coordinate [4Fe-4S] cluster.

It belongs to the complex I 23 kDa subunit family. As to quaternary structure, NDH-1 is composed of 14 different subunits. Subunits NuoA, H, J, K, L, M, N constitute the membrane sector of the complex. The cofactor is [4Fe-4S] cluster.

Its subcellular location is the cell inner membrane. The catalysed reaction is a quinone + NADH + 5 H(+)(in) = a quinol + NAD(+) + 4 H(+)(out). NDH-1 shuttles electrons from NADH, via FMN and iron-sulfur (Fe-S) centers, to quinones in the respiratory chain. The immediate electron acceptor for the enzyme in this species is believed to be ubiquinone. Couples the redox reaction to proton translocation (for every two electrons transferred, four hydrogen ions are translocated across the cytoplasmic membrane), and thus conserves the redox energy in a proton gradient. This is NADH-quinone oxidoreductase subunit I from Xanthomonas oryzae pv. oryzae (strain KACC10331 / KXO85).